Consider the following 281-residue polypeptide: Pantothenate synthetase (281 aa).

30–37 provides a ligand contact to ATP; sequence MGYYHAGH. Residue histidine 37 is the Proton donor of the active site. Residue glutamine 61 participates in (R)-pantoate binding. Glutamine 61 is a binding site for beta-alanine. Position 147–150 (147–150) interacts with ATP; sequence GEKD. Glutamine 153 contributes to the (R)-pantoate binding site. ATP is bound by residues valine 176 and 184–187; that span reads MSSR.

This sequence belongs to the pantothenate synthetase family. As to quaternary structure, homodimer.

It is found in the cytoplasm. The enzyme catalyses (R)-pantoate + beta-alanine + ATP = (R)-pantothenate + AMP + diphosphate + H(+). Its pathway is cofactor biosynthesis; (R)-pantothenate biosynthesis; (R)-pantothenate from (R)-pantoate and beta-alanine: step 1/1. Catalyzes the condensation of pantoate with beta-alanine in an ATP-dependent reaction via a pantoyl-adenylate intermediate. In Oleidesulfovibrio alaskensis (strain ATCC BAA-1058 / DSM 17464 / G20) (Desulfovibrio alaskensis), this protein is Pantothenate synthetase.